The sequence spans 237 residues: Ribonuclease PH (237 aa).

Residues Arg-86 and Gly-124–Arg-126 contribute to the phosphate site.

The protein belongs to the RNase PH family. In terms of assembly, homohexameric ring arranged as a trimer of dimers.

The catalysed reaction is tRNA(n+1) + phosphate = tRNA(n) + a ribonucleoside 5'-diphosphate. In terms of biological role, phosphorolytic 3'-5' exoribonuclease that plays an important role in tRNA 3'-end maturation. Removes nucleotide residues following the 3'-CCA terminus of tRNAs; can also add nucleotides to the ends of RNA molecules by using nucleoside diphosphates as substrates, but this may not be physiologically important. Probably plays a role in initiation of 16S rRNA degradation (leading to ribosome degradation) during starvation. The sequence is that of Ribonuclease PH from Shewanella frigidimarina (strain NCIMB 400).